Here is a 398-residue protein sequence, read N- to C-terminus: Lysophosphatidylserine lipase ABHD12 (398 aa).

Positions 1 to 15 are enriched in basic and acidic residues; the sequence is MRKRTEPVTLEHERC. The interval 1 to 24 is disordered; that stretch reads MRKRTEPVTLEHERCAASGSSSSG. At 1–74 the chain is on the cytoplasmic side; sequence MRKRTEPVTL…RKSLWFRLRK (74 aa). Residues 75–95 form a helical membrane-spanning segment; it reads ILLCVLGFYIAIPFLVKLCPG. Topologically, residues 96–398 are extracellular; sequence IQAKLIFLNF…LGKSEPERQH (303 aa). Asn123 is a glycosylation site (N-linked (GlcNAc...) asparagine). Ser246 functions as the Nucleophile in the catalytic mechanism. Catalysis depends on charge relay system residues Asp333 and His372.

It belongs to the serine esterase family.

It is found in the endoplasmic reticulum membrane. The enzyme catalyses 1-(9Z-octadecenoyl)-sn-glycero-3-phospho-L-serine + H2O = sn-glycero-3-phospho-L-serine + (9Z)-octadecenoate + H(+). It catalyses the reaction 1-(9Z-octadecenoyl)-sn-glycero-3-phospho-(1'-sn-glycerol) + H2O = sn-glycero-3-phospho-(1'-sn-glycerol) + (9Z)-octadecenoate + H(+). It carries out the reaction 1-(9Z-octadecenoyl)-sn-glycero-3-phospho-(1D-myo-inositol) + H2O = sn-glycero-3-phospho-1D-myo-inositol + (9Z)-octadecenoate + H(+). The catalysed reaction is 1-(9Z-octadecenoyl)-sn-glycero-3-phosphoethanolamine + H2O = sn-glycero-3-phosphoethanolamine + (9Z)-octadecenoate + H(+). The enzyme catalyses 1-(9Z-octadecenoyl)-sn-glycero-3-phosphocholine + H2O = 1-(9Z-octadecenoyl)-sn-glycerol + phosphocholine + H(+). It catalyses the reaction 2-(9Z-octadecenoyl)-glycerol + H2O = glycerol + (9Z)-octadecenoate + H(+). It carries out the reaction 1-hexadecanoyl-sn-glycero-3-phospho-L-serine + H2O = sn-glycero-3-phospho-L-serine + hexadecanoate + H(+). The catalysed reaction is 2-(5Z,8Z,11Z,14Z-eicosatetraenoyl)-glycerol + H2O = glycerol + (5Z,8Z,11Z,14Z)-eicosatetraenoate + H(+). The enzyme catalyses Hydrolyzes glycerol monoesters of long-chain fatty acids.. It catalyses the reaction 1-decanoylglycerol + H2O = decanoate + glycerol + H(+). It carries out the reaction 1-dodecanoylglycerol + H2O = dodecanoate + glycerol + H(+). The catalysed reaction is 1-tetradecanoylglycerol + H2O = tetradecanoate + glycerol + H(+). The enzyme catalyses 2-hexadecanoylglycerol + H2O = glycerol + hexadecanoate + H(+). It catalyses the reaction 1-(9Z-octadecenoyl)-glycerol + H2O = glycerol + (9Z)-octadecenoate + H(+). It carries out the reaction 2-(9Z,12Z-octadecadienoyl)-glycerol + H2O = (9Z,12Z)-octadecadienoate + glycerol + H(+). The catalysed reaction is 1-(5Z,8Z,11Z,14Z-eicosatetraenoyl)-glycerol + H2O = glycerol + (5Z,8Z,11Z,14Z)-eicosatetraenoate + H(+). The enzyme catalyses 1-(9Z,12Z-octadecadienoyl)-glycerol + H2O = (9Z,12Z)-octadecadienoate + glycerol + H(+). It catalyses the reaction 1-hexadecanoylglycerol + H2O = glycerol + hexadecanoate + H(+). It carries out the reaction 1-octadecanoylglycerol + H2O = octadecanoate + glycerol + H(+). The catalysed reaction is 1-octadecanoyl-2-(9,10-epoxyoctadecanoyl)-sn-glycero-3-phospho-L-serine + H2O = 9,10-epoxyoctadecanoate + 1-octadecanoyl-sn-glycero-3-phosphoserine + H(+). The enzyme catalyses 1-octadecanoyl-2-(10-hydroxyoctadecanoyl)-sn-glycero-3-phospho-L-serine + H2O = 1-octadecanoyl-sn-glycero-3-phosphoserine + 10-hydroxyoctadecanoate + H(+). It catalyses the reaction 1-hexadecanoyl-2-(10-hydroxyoctadecanoyl)-sn-glycero-3-phospho-L-serine + H2O = 10-hydroxyoctadecanoate + 1-hexadecanoyl-sn-glycero-3-phospho-L-serine + H(+). Functionally, lysophosphatidylserine (LPS) lipase that mediates the hydrolysis of lysophosphatidylserine, a class of signaling lipids that regulates immunological and neurological processes. Represents a major lysophosphatidylserine lipase in the brain, thereby playing a key role in the central nervous system. Also able to hydrolyze oxidized phosphatidylserine; oxidized phosphatidylserine is produced in response to severe inflammatory stress and constitutes a proapoptotic 'eat me' signal. Also has monoacylglycerol (MAG) lipase activity: hydrolyzes 2-arachidonoylglycerol (2-AG), thereby acting as a regulator of endocannabinoid signaling pathways. Has a strong preference for very-long-chain lipid substrates; substrate specificity is likely due to improved catalysis and not improved substrate binding. The chain is Lysophosphatidylserine lipase ABHD12 from Rattus norvegicus (Rat).